Reading from the N-terminus, the 212-residue chain is Stromal cell-derived factor 2-like protein (212 aa).

An N-terminal signal peptide occupies residues 1 to 19; sequence MKSLFLILILCITIPLIFA. The N-linked (GlcNAc...) asparagine glycan is linked to Asn20. 3 MIR domains span residues 29–86, 94–149, and 151–206; these read ITKV…IKGP, GTVV…VETE, and GKEW…TEEG.

Its subcellular location is the secreted. This chain is Stromal cell-derived factor 2-like protein, found in Dictyostelium discoideum (Social amoeba).